Consider the following 242-residue polypeptide: Cell division protein FtsQ (242 aa).

Residues 1 to 12 lie on the Cytoplasmic side of the membrane; it reads MWDNAEAMERLT. Residues 13-32 traverse the membrane as a helical segment; that stretch reads RWLLVMMAMLLAASGLVWFY. The Periplasmic portion of the chain corresponds to 33–242; it reads NSNHLPVKQV…DGLPEKESEE (210 aa). The region spanning 37–106 is the POTRA domain; that stretch reads LPVKQVSLKG…DTVEVVLTER (70 aa).

Belongs to the FtsQ/DivIB family. FtsQ subfamily. Part of a complex composed of FtsB, FtsL and FtsQ.

The protein localises to the cell inner membrane. Its function is as follows. Essential cell division protein. May link together the upstream cell division proteins, which are predominantly cytoplasmic, with the downstream cell division proteins, which are predominantly periplasmic. May control correct divisome assembly. The sequence is that of Cell division protein FtsQ from Neisseria gonorrhoeae (strain ATCC 700825 / FA 1090).